The chain runs to 401 residues: Calcium-responsive transcription coactivator (401 aa).

The N-terminal auto-inhibitory domain; necessary for interaction with SMARCA4/BRG1 stretch occupies residues 1–148 (MSVAFASARP…TLPTTSMSMS (148 aa)). The short motif at 50 to 53 (YQQI) is the SH2-binding element. Disordered regions lie at residues 72–171 (QSLL…VPMQ) and 214–401 (TRAR…NYQQ). The segment covering 85 to 106 (LGPGALSQSGSSQGLHPQGSLS) has biased composition (low complexity). The span at 128–137 (NHVSMQQTAQ) shows a compositional bias: polar residues. A compositionally biased stretch (low complexity) spans 138 to 149 (STLPTTSMSMSG). The interval 149-237 (GSGHGTGPGY…GGSMMGQRPM (89 aa)) is methionine-rich intra-molecular domain. The tract at residues 251-322 (YLGQEEYYSE…SQYSQQQAGY (72 aa)) is MFD domain. 2 stretches are compositionally biased toward polar residues: residues 260 to 276 (EQYS…SQQY) and 285 to 294 (AYQQSSYTEQ). A compositionally biased stretch (basic and acidic residues) spans 295-304 (SYDRSFEDPT). Residues 310-374 (GGNSQYSQQQ…QGQGQQYGSY (65 aa)) are compositionally biased toward low complexity. The necessary for nuclear localization stretch occupies residues 339 to 401 (NQQSYPGQQQ…EQGQYGNYQQ (63 aa)). The SH2-binding signature appears at 358–361 (SQYS). Over residues 375–387 (RTSQTGPSAQQQR) the composition is skewed to polar residues. Residues 376-384 (TSQTGPSAQ) carry the SH3-binding motif. Positions 389–401 (YGYEQGQYGNYQQ) are enriched in low complexity. The necessary for interaction with CREBBP and for the recruitment of CREBBP to the nuclear bodies stretch occupies residues 392–401 (EQGQYGNYQQ). An SH2-binding motif is present at residues 396 to 399 (YGNY).

Belongs to the SS18 family. Homodimer. Dimerization may be necessary for its function in neuronal dendritic development. Interacts (via C-terminus) with CREBBP (via N-terminus), EP300 and SMARCA4/BRG1. Interacts with the nBAF complex. Association with CREBBP facilitates transcription while the association with SMARCA4/BRG1 suppresses CREST-mediated transcription in resting neurons. As to expression, brain (at protein level). Also found in the heart, liver, kidney and testis.

It localises to the nucleus. The protein localises to the chromosome. It is found in the centromere. Its subcellular location is the kinetochore. Functionally, transcriptional activator which is required for calcium-dependent dendritic growth and branching in cortical neurons. Recruits CREB-binding protein (CREBBP) to nuclear bodies. Component of the CREST-BRG1 complex, a multiprotein complex that regulates promoter activation by orchestrating a calcium-dependent release of a repressor complex and a recruitment of an activator complex. In resting neurons, transcription of the c-FOS promoter is inhibited by BRG1-dependent recruitment of a phospho-RB1-HDAC1 repressor complex. Upon calcium influx, RB1 is dephosphorylated by calcineurin, which leads to release of the repressor complex. At the same time, there is increased recruitment of CREBBP to the promoter by a CREST-dependent mechanism, which leads to transcriptional activation. The CREST-BRG1 complex also binds to the NR2B promoter, and activity-dependent induction of NR2B expression involves a release of HDAC1 and recruitment of CREBBP. The protein is Calcium-responsive transcription coactivator (Ss18l1) of Rattus norvegicus (Rat).